Reading from the N-terminus, the 657-residue chain is Kinesin-like protein KIF22 (657 aa).

Residues 1–33 (MNVRAKKKPQQREMASASSGPSRSLSKGGVSRR) form a disordered region. The segment covering 16-33 (SASSGPSRSLSKGGVSRR) has biased composition (low complexity). Residues 38–360 (RVRVAVRLRP…LNFTARSKEV (323 aa)) enclose the Kinesin motor domain. 119 to 126 (GPTGAGKT) is a binding site for ATP. The segment at 388–415 (PSEAKKAKGPEEESTGSPESTAAPASAS) is disordered. A compositionally biased stretch (low complexity) spans 402-415 (TGSPESTAAPASAS). A phosphoserine mark is found at Ser404, Ser419, and Ser444. Lys457 is covalently cross-linked (Glycyl lysine isopeptide (Lys-Gly) (interchain with G-Cter in SUMO2)). Residues 457 to 502 (KRERMVLIKTVEEKNLEIERLKMKQKELEAKVLAQEALDPKEKENT) are a coiled coil. Phosphoserine occurs at positions 537, 554, and 573.

This sequence belongs to the TRAFAC class myosin-kinesin ATPase superfamily. Kinesin family. In terms of assembly, interacts with FAM83D and SIAH1. In terms of processing, ubiquitinated; mediated by SIAH1 and leading to its subsequent proteasomal degradation.

The protein resides in the nucleus. The protein localises to the cytoplasm. It localises to the cytoskeleton. Functionally, kinesin family member that is involved in spindle formation and the movements of chromosomes during mitosis and meiosis. Binds to microtubules and to DNA. Plays a role in congression of laterally attached chromosomes in NDC80-depleted cells. This Rattus norvegicus (Rat) protein is Kinesin-like protein KIF22 (Kif22).